The sequence spans 162 residues: Caveolin-2 (162 aa).

Residues 1 to 86 (MGLETEKADV…FEISKYVIYK (86 aa)) lie on the Cytoplasmic side of the membrane. At Tyr-19 the chain carries Phosphotyrosine; by SRC. Residues Ser-20 and Ser-23 each carry the phosphoserine modification. Residue Tyr-27 is modified to Phosphotyrosine; by SRC. Phosphoserine is present on Ser-36. The segment at residues 87 to 107 (FLTVFLAIPLAFTAGILFATL) is an intramembrane region (helical). The Cytoplasmic segment spans residues 108–162 (SCLHIWIIMPFVKTCLMVLPSVQTIWRSVTDVIIAPLCTSIGRICSSVSLQVSHD).

The protein belongs to the caveolin family. Monomer or homodimer. Interacts with CAV1; the interaction forms a stable heterooligomeric complex that is required for targeting to lipid rafts and for caveolae formation. Tyrosine phosphorylated forms do not form heterooligomers with the Tyr-19-phosphorylated form existing as a monomer or dimer, and the Tyr-27-form as a monomer only. Interacts (tyrosine phosphorylated form) with the SH2 domain-containing proteins, RASA1, NCK1 and SRC. Interacts (tyrosine phosphorylated form) with INSR, the interaction (Tyr-27-phosphorylated form) is increased on insulin stimulation. Interacts (Tyr-19 phosphorylated form) with MAPK1 (phosphorylated form); the interaction, promoted by insulin, leads to nuclear location and MAPK1 activation. Interacts with STAT3; the interaction is increased on insulin-induced tyrosine phosphorylation leading to STAT activation. In terms of processing, phosphorylated on serine and tyrosine residues. CAV1 promotes phosphorylation on Ser-23 which then targets the complex to the plasma membrane, lipid rafts and caveolae. Phosphorylation on Ser-36 appears to modulate mitosis in endothelial cells. Phosphorylation on both Tyr-19 and Tyr-27 is required for insulin-induced 'Ser-727' phosphorylation of STAT3 and its activation. Phosphorylation on Tyr-19 is required for insulin-induced phosphorylation of MAPK1 and DNA binding of STAT3. Tyrosine phosphorylation is induced by both EGF and insulin (By. similarity).

The protein resides in the nucleus. It localises to the cytoplasm. Its subcellular location is the golgi apparatus membrane. It is found in the cell membrane. The protein localises to the membrane. The protein resides in the caveola. Its function is as follows. May act as a scaffolding protein within caveolar membranes. Interacts directly with G-protein alpha subunits and can functionally regulate their activity. Acts as an accessory protein in conjunction with CAV1 in targeting to lipid rafts and driving caveolae formation. The Ser-36 phosphorylated form has a role in modulating mitosis in endothelial cells. Positive regulator of cellular mitogenesis of the MAPK signaling pathway. Required for the insulin-stimulated nuclear translocation and activation of MAPK1 and STAT3, and the subsequent regulation of cell cycle progression. This Atelerix albiventris (Middle-African hedgehog) protein is Caveolin-2 (CAV2).